The following is a 64-amino-acid chain: Large ribosomal subunit protein uL30 (64 aa).

This sequence belongs to the universal ribosomal protein uL30 family. Part of the 50S ribosomal subunit.

In Syntrophus aciditrophicus (strain SB), this protein is Large ribosomal subunit protein uL30.